The primary structure comprises 103 residues: Eukaryotic translation initiation factor 4E-1A-binding protein homolog (103 aa).

The interval 49 to 103 is disordered; sequence NSPLSKTPPPQLAHITNTELNKKVEKSTTTPTTTTPPTTTAKPKPTNDDDIFPME. The segment covering 76 to 92 has biased composition (low complexity); that stretch reads TTTPTTTTPPTTTAKPK.

The protein belongs to the eIF4E-binding protein family.

In terms of biological role, regulates assembly of the eIF4F complex. The chain is Eukaryotic translation initiation factor 4E-1A-binding protein homolog (febA) from Dictyostelium discoideum (Social amoeba).